The primary structure comprises 510 residues: Glutamate decarboxylase (510 aa).

107–109 (QLS) provides a ligand contact to substrate. Residue K322 is modified to N6-(pyridoxal phosphate)lysine. Position 483 (R483) interacts with substrate.

It belongs to the group II decarboxylase family. In terms of assembly, homodimer. Pyridoxal 5'-phosphate serves as cofactor. Expressed in the head (at protein level).

The catalysed reaction is L-glutamate + H(+) = 4-aminobutanoate + CO2. Functionally, catalyzes the production of GABA. The polypeptide is Glutamate decarboxylase (Gad1) (Drosophila melanogaster (Fruit fly)).